We begin with the raw amino-acid sequence, 208 residues long: Protein GrpE (208 aa).

Residues 1–12 (MTNKDESVEKNT) are compositionally biased toward basic and acidic residues. Residues 1-51 (MTNKDESVEKNTESTVEETNVKQNIDDSVEQAEESKGHLQDEAIEETSDEN) are disordered. Polar residues predominate over residues 13–23 (ESTVEETNVKQ). The segment covering 42–51 (EAIEETSDEN) has biased composition (acidic residues).

It belongs to the GrpE family. Homodimer.

The protein localises to the cytoplasm. Its function is as follows. Participates actively in the response to hyperosmotic and heat shock by preventing the aggregation of stress-denatured proteins, in association with DnaK and GrpE. It is the nucleotide exchange factor for DnaK and may function as a thermosensor. Unfolded proteins bind initially to DnaJ; upon interaction with the DnaJ-bound protein, DnaK hydrolyzes its bound ATP, resulting in the formation of a stable complex. GrpE releases ADP from DnaK; ATP binding to DnaK triggers the release of the substrate protein, thus completing the reaction cycle. Several rounds of ATP-dependent interactions between DnaJ, DnaK and GrpE are required for fully efficient folding. The protein is Protein GrpE of Staphylococcus aureus (strain USA300).